A 68-amino-acid chain; its full sequence is Neuronal regeneration-related protein (68 aa).

The tract at residues 22–54 (EGRLPKGRLPVPKEVNRKKNDETNAASLTPLGS) is disordered. Positions 44–54 (TNAASLTPLGS) are enriched in polar residues. Position 59 is a phosphoserine (serine 59).

Interacts with the latency-associated peptides (LAP) of TGFB1 and TGFB2; the interaction results in a decrease in TGFB autoinduction. Interacts with FLNA. Post-translationally, phosphorylated on Ser-59. Phosphorylation decreases stability and activity. Expressed in lung (at protein level).

The protein resides in the cytoplasm. May have roles in neural function. Ectopic expression augments motility of gliomas. Also promotes axonal regeneration. May also have functions in cellular differentiation. Induces differentiation of fibroblast into myofibroblast and myofibroblast ameboid migration. Increases retinoic-acid regulation of lipid-droplet biogenesis. Down-regulates the expression of TGFB1 and TGFB2 but not of TGFB3. May play a role in the regulation of alveolar generation. The protein is Neuronal regeneration-related protein (NREP) of Homo sapiens (Human).